The sequence spans 1651 residues: Vitellogenin-6 (1651 aa).

The first 15 residues, 1 to 15, serve as a signal peptide directing secretion; that stretch reads MKFFIALALLGAALA. Residues 34-716 form the Vitellogenin domain; it reads FRAGREYRYL…TTESVLPTEM (683 aa). Asparagine 252 and asparagine 1288 each carry an N-linked (GlcNAc...) asparagine glycan. Positions 1340–1515 constitute a VWFD domain; it reads ANCVVKSTKI…SYLYKDSKCN (176 aa). Intrachain disulfides connect cysteine 1342-cysteine 1479 and cysteine 1364-cysteine 1514. Residues 1527–1556 are disordered; it reads FQRIEKNQEEEKDQEMNYEESRREQDDEPT.

In terms of tissue distribution, synthesized in Caenorhabditis only by 32 cells building the intestine of adult hermaphroditic individuals; they are cotranslationally secreted into the body cavity and subsequently taken up by the gonad.

It is found in the secreted. In terms of biological role, precursor of the egg-yolk proteins that are sources of nutrients during embryonic development. May play a role in cholesterol uptake. May be involved in thermotolerance. In Caenorhabditis elegans, this protein is Vitellogenin-6 (vit-6).